The following is a 271-amino-acid chain: MKIIPCPSSPLLARRVAEAAGIEIGGAVFKKFPDGELYVRVMEKEGVVVGSINSNEDLIALIFALDVLENAKAVVPYMGYARQDKVFQEGEAVSIKIVAEMLESRADEVVTVNIHSSDAASHFSKLKNLDAMPLVGEYFAGKDVVMISPDKGSMERVKTAAKHAGCEWDYMEKRRIDATTVEITPKTIDVEGRDVVIVDDIISTGGTVAEAARILYGLGAKSVSAACVHAVLAENAAIKLFNAGIKDIIATDTVECAFSRISVAELIAENI.

Residues 34–36 and 82–83 each bind ATP; these read DGE and RQ. 2 residues coordinate Mg(2+): histidine 115 and aspartate 150. The active site involves lysine 173. D-ribose 5-phosphate is bound by residues arginine 175, aspartate 199, and 203–207; that span reads STGGT.

This sequence belongs to the ribose-phosphate pyrophosphokinase family. Class III (archaeal) subfamily. It depends on Mg(2+) as a cofactor.

Its subcellular location is the cytoplasm. The enzyme catalyses D-ribose 5-phosphate + ATP = 5-phospho-alpha-D-ribose 1-diphosphate + AMP + H(+). It functions in the pathway metabolic intermediate biosynthesis; 5-phospho-alpha-D-ribose 1-diphosphate biosynthesis; 5-phospho-alpha-D-ribose 1-diphosphate from D-ribose 5-phosphate (route I): step 1/1. In terms of biological role, involved in the biosynthesis of the central metabolite phospho-alpha-D-ribosyl-1-pyrophosphate (PRPP) via the transfer of pyrophosphoryl group from ATP to 1-hydroxyl of ribose-5-phosphate (Rib-5-P). In Archaeoglobus fulgidus (strain ATCC 49558 / DSM 4304 / JCM 9628 / NBRC 100126 / VC-16), this protein is Ribose-phosphate pyrophosphokinase 2.